Here is an 83-residue protein sequence, read N- to C-terminus: High-potential iron-sulfur protein (83 aa).

The [4Fe-4S] cluster site is built by Cys-43, Cys-46, Cys-61, and Cys-75.

The protein belongs to the high-potential iron-sulfur protein (HiPIP) family. As to quaternary structure, homodimer.

In terms of biological role, specific class of high-redox-potential 4Fe-4S ferredoxins. Functions in anaerobic electron transport in most purple and in some other photosynthetic bacteria and in at least one genus (Paracoccus) of halophilic, denitrifying bacteria. This Thermochromatium tepidum (Chromatium tepidum) protein is High-potential iron-sulfur protein (hip).